We begin with the raw amino-acid sequence, 541 residues long: Methyl-accepting chemotaxis protein PcaY (541 aa).

Over 1–10 (MLANLKIRTG) the chain is Cytoplasmic. A helical transmembrane segment spans residues 11 to 31 (MFWVLSLFSLTLLFSTASAWW). At 32 to 189 (AAVGSDQQIT…ESDRRLARAQ (158 aa)) the chain is on the periplasmic side. The segment at 35–187 (GSDQQITELD…MLESDRRLAR (153 aa)) is ligand-binding domain. Residues 190–210 (LLSLCLLGMTVVLAVLCWAFI) form a helical membrane-spanning segment. Residues 211–541 (AQRVLHPLRE…MTALVGRFKV (331 aa)) lie on the Cytoplasmic side of the membrane. In terms of domain architecture, HAMP spans 212 to 264 (QRVLHPLREAGGHFRRIASGDLSVPVQGQGNNEIGQLFHELQRMQQSQRDTLG). In terms of domain architecture, Methyl-accepting transducer spans 269 to 505 (CARQLDAAAS…EVDRNLLNIR (237 aa)). The tract at residues 322–341 (TSQTTSESNQLAAQSRRQVS) is disordered.

The protein belongs to the methyl-accepting chemotaxis (MCP) protein family.

It is found in the cell inner membrane. Chemotactic-signal transducers respond to changes in the concentration of attractants and repellents in the environment, transduce a signal from the outside to the inside of the cell, and facilitate sensory adaptation through the variation of the level of methylation. PcaY is responsible for the detection of multiple aromatic and hydroaromatic compounds that are metabolized through the beta-ketoadipate catabolic pathway, including vanillin, vanillate, 4-hydroxybenzoate (4-HBA), benzoate and protocatechuate. It also senses several nonmetabolizable aromatic compounds. In Pseudomonas putida (strain ATCC 700007 / DSM 6899 / JCM 31910 / BCRC 17059 / LMG 24140 / F1), this protein is Methyl-accepting chemotaxis protein PcaY.